A 456-amino-acid chain; its full sequence is Gamma-glutamyl phosphate reductase (456 aa).

At Ser-2 the chain carries N-acetylserine.

This sequence belongs to the gamma-glutamyl phosphate reductase family.

The enzyme catalyses L-glutamate 5-semialdehyde + phosphate + NADP(+) = L-glutamyl 5-phosphate + NADPH + H(+). It functions in the pathway amino-acid biosynthesis; L-proline biosynthesis; L-glutamate 5-semialdehyde from L-glutamate: step 2/2. In terms of biological role, catalyzes the NADPH dependent reduction of L-gamma-glutamyl 5-phosphate into L-glutamate 5-semialdehyde and phosphate. The product spontaneously undergoes cyclization to form 1-pyrroline-5-carboxylate. The polypeptide is Gamma-glutamyl phosphate reductase (PRO2) (Saccharomyces cerevisiae (strain ATCC 204508 / S288c) (Baker's yeast)).